Here is a 184-residue protein sequence, read N- to C-terminus: Protein GrpE (184 aa).

The disordered stretch occupies residues 1 to 26; that stretch reads MTAPQEPVDSTPESGENAATPGLEDD.

The protein belongs to the GrpE family. As to quaternary structure, homodimer.

It localises to the cytoplasm. In terms of biological role, participates actively in the response to hyperosmotic and heat shock by preventing the aggregation of stress-denatured proteins, in association with DnaK and GrpE. It is the nucleotide exchange factor for DnaK and may function as a thermosensor. Unfolded proteins bind initially to DnaJ; upon interaction with the DnaJ-bound protein, DnaK hydrolyzes its bound ATP, resulting in the formation of a stable complex. GrpE releases ADP from DnaK; ATP binding to DnaK triggers the release of the substrate protein, thus completing the reaction cycle. Several rounds of ATP-dependent interactions between DnaJ, DnaK and GrpE are required for fully efficient folding. This chain is Protein GrpE, found in Bordetella bronchiseptica (strain ATCC BAA-588 / NCTC 13252 / RB50) (Alcaligenes bronchisepticus).